Reading from the N-terminus, the 211-residue chain is 1-deoxy-D-xylulose 5-phosphate reductoisomerase (211 aa).

Mn(2+) is bound at residue aspartate 14. 1-deoxy-D-xylulose 5-phosphate-binding residues include serine 15, glutamate 16, serine 40, histidine 63, serine 76, asparagine 81, lysine 82, and glutamate 85. Glutamate 16 lines the Mn(2+) pocket. Glutamate 85 is a binding site for Mn(2+).

The protein belongs to the DXR family. It depends on Mn(2+) as a cofactor. Requires Mg(2+) as cofactor. Mostly expressed in flowers and, to a lower extent, in leaves.

The protein resides in the plastid. It localises to the chloroplast stroma. The enzyme catalyses 2-C-methyl-D-erythritol 4-phosphate + NADP(+) = 1-deoxy-D-xylulose 5-phosphate + NADPH + H(+). It participates in isoprenoid biosynthesis; isopentenyl diphosphate biosynthesis via DXP pathway; isopentenyl diphosphate from 1-deoxy-D-xylulose 5-phosphate: step 1/6. Enzyme of the plastid non-mevalonate pathway for isoprenoid biosynthesis that catalyzes the NADPH-dependent rearrangement and reduction of 1-deoxy-D-xylulose-5-phosphate (DXP) to 2-C-methyl-D-erythritol 4-phosphate (MEP). Required for chloroplast development. The sequence is that of 1-deoxy-D-xylulose 5-phosphate reductoisomerase from Thymus vulgaris (Thyme).